Here is a 37-residue protein sequence, read N- to C-terminus: Cytochrome b6-f complex subunit 5 (37 aa).

A helical membrane pass occupies residues 5-25; that stretch reads LLSGIVLGLIPITLVGLFVTA.

Belongs to the PetG family. As to quaternary structure, the 4 large subunits of the cytochrome b6-f complex are cytochrome b6, subunit IV (17 kDa polypeptide, PetD), cytochrome f and the Rieske protein, while the 4 small subunits are PetG, PetL, PetM and PetN. The complex functions as a dimer.

It is found in the plastid. It localises to the chloroplast thylakoid membrane. Functionally, component of the cytochrome b6-f complex, which mediates electron transfer between photosystem II (PSII) and photosystem I (PSI), cyclic electron flow around PSI, and state transitions. PetG is required for either the stability or assembly of the cytochrome b6-f complex. This Welwitschia mirabilis (Tree tumbo) protein is Cytochrome b6-f complex subunit 5.